The following is an 81-amino-acid chain: uncharacterized protein (81 aa).

The N-terminal stretch at methionine 1–alanine 31 is a signal peptide. A helical membrane pass occupies residues tryptophan 52 to glycine 74.

It localises to the membrane. This is an uncharacterized protein from Pasteurella multocida (strain Pm70).